We begin with the raw amino-acid sequence, 901 residues long: HTH-type transcriptional regulator MalT (901 aa).

Residue 39-46 (SPAGYGKT) participates in ATP binding. In terms of domain architecture, HTH luxR-type spans 829 to 894 (ELIRTSPLTQ…DAVQHAQQLL (66 aa)). The H-T-H motif DNA-binding region spans 853-872 (NDQIAGELDVAATTIKTHIR).

It belongs to the MalT family. As to quaternary structure, monomer in solution. Oligomerizes to an active state in the presence of the positive effectors ATP and maltotriose.

Its activity is regulated as follows. Activated by ATP and maltotriose, which are both required for DNA binding. Its function is as follows. Positively regulates the transcription of the maltose regulon whose gene products are responsible for uptake and catabolism of malto-oligosaccharides. Specifically binds to the promoter region of its target genes, recognizing a short DNA motif called the MalT box. This is HTH-type transcriptional regulator MalT from Cronobacter sakazakii (strain ATCC BAA-894) (Enterobacter sakazakii).